The sequence spans 349 residues: Anthranilate phosphoribosyltransferase (349 aa).

5-phospho-alpha-D-ribose 1-diphosphate contacts are provided by residues Gly-86, Gly-89 to Asp-90, Thr-94, Asn-96 to Thr-99, Lys-114 to Gly-122, and Ser-126. An anthranilate-binding site is contributed by Gly-86. Residue Ser-98 coordinates Mg(2+). Asn-117 lines the anthranilate pocket. Arg-172 contributes to the anthranilate binding site. Mg(2+)-binding residues include Asp-231 and Glu-232.

It belongs to the anthranilate phosphoribosyltransferase family. In terms of assembly, homodimer. Mg(2+) is required as a cofactor.

The catalysed reaction is N-(5-phospho-beta-D-ribosyl)anthranilate + diphosphate = 5-phospho-alpha-D-ribose 1-diphosphate + anthranilate. The protein operates within amino-acid biosynthesis; L-tryptophan biosynthesis; L-tryptophan from chorismate: step 2/5. Its function is as follows. Catalyzes the transfer of the phosphoribosyl group of 5-phosphorylribose-1-pyrophosphate (PRPP) to anthranilate to yield N-(5'-phosphoribosyl)-anthranilate (PRA). This Prochlorococcus marinus (strain MIT 9312) protein is Anthranilate phosphoribosyltransferase.